The sequence spans 361 residues: Membrane-bound lytic murein transglycosylase B (361 aa).

Positions 1 to 18 (MFKRRYVTLLPLFVLLAA) are cleaved as a signal peptide. Cysteine 19 carries N-palmitoyl cysteine lipidation. Cysteine 19 carries the S-diacylglycerol cysteine lipid modification. Glutamate 162 is a catalytic residue.

In terms of assembly, monomer.

The protein localises to the cell outer membrane. It carries out the reaction Exolytic cleavage of the (1-&gt;4)-beta-glycosidic linkage between N-acetylmuramic acid (MurNAc) and N-acetylglucosamine (GlcNAc) residues in peptidoglycan, from either the reducing or the non-reducing ends of the peptidoglycan chains, with concomitant formation of a 1,6-anhydrobond in the MurNAc residue.. Functionally, murein-degrading enzyme. Catalyzes the cleavage of the glycosidic bonds between N-acetylmuramic acid and N-acetylglucosamine residues in peptidoglycan. May play a role in recycling of muropeptides during cell elongation and/or cell division. The polypeptide is Membrane-bound lytic murein transglycosylase B (mltB) (Escherichia coli (strain K12)).